The following is a 462-amino-acid chain: Cysteine--tRNA ligase (462 aa).

Cys-24 provides a ligand contact to Zn(2+). A 'HIGH' region motif is present at residues 26-36 (PTVYDDAHLGH). Zn(2+)-binding residues include Cys-199, His-224, and Glu-228. A 'KMSKS' region motif is present at residues 256–260 (KMSKS). Lys-259 contacts ATP.

The protein belongs to the class-I aminoacyl-tRNA synthetase family. Monomer. Zn(2+) is required as a cofactor.

The protein resides in the cytoplasm. The catalysed reaction is tRNA(Cys) + L-cysteine + ATP = L-cysteinyl-tRNA(Cys) + AMP + diphosphate. The chain is Cysteine--tRNA ligase from Campylobacter jejuni subsp. jejuni serotype O:6 (strain 81116 / NCTC 11828).